Consider the following 198-residue polypeptide: ATP synthase subunit b (198 aa).

Residues 49–67 (IWKWANFLILAGGLGYLVG) traverse the membrane as a helical segment.

It belongs to the ATPase B chain family. As to quaternary structure, F-type ATPases have 2 components, F(1) - the catalytic core - and F(0) - the membrane proton channel. F(1) has five subunits: alpha(3), beta(3), gamma(1), delta(1), epsilon(1). F(0) has three main subunits: a(1), b(2) and c(10-14). The alpha and beta chains form an alternating ring which encloses part of the gamma chain. F(1) is attached to F(0) by a central stalk formed by the gamma and epsilon chains, while a peripheral stalk is formed by the delta and b chains.

The protein localises to the cell inner membrane. Its function is as follows. F(1)F(0) ATP synthase produces ATP from ADP in the presence of a proton or sodium gradient. F-type ATPases consist of two structural domains, F(1) containing the extramembraneous catalytic core and F(0) containing the membrane proton channel, linked together by a central stalk and a peripheral stalk. During catalysis, ATP synthesis in the catalytic domain of F(1) is coupled via a rotary mechanism of the central stalk subunits to proton translocation. Functionally, component of the F(0) channel, it forms part of the peripheral stalk, linking F(1) to F(0). The polypeptide is ATP synthase subunit b (Solibacter usitatus (strain Ellin6076)).